The following is a 351-amino-acid chain: DNA polymerase IV (351 aa).

The UmuC domain maps to 4-185 (IIHVDMDCFF…LPLAKIPGVG (182 aa)). Residues D8 and D103 each coordinate Mg(2+). Residue E104 is part of the active site.

The protein belongs to the DNA polymerase type-Y family. As to quaternary structure, monomer. Mg(2+) is required as a cofactor.

It is found in the cytoplasm. It carries out the reaction DNA(n) + a 2'-deoxyribonucleoside 5'-triphosphate = DNA(n+1) + diphosphate. In terms of biological role, poorly processive, error-prone DNA polymerase involved in untargeted mutagenesis. Copies undamaged DNA at stalled replication forks, which arise in vivo from mismatched or misaligned primer ends. These misaligned primers can be extended by PolIV. Exhibits no 3'-5' exonuclease (proofreading) activity. May be involved in translesional synthesis, in conjunction with the beta clamp from PolIII. The protein is DNA polymerase IV of Escherichia coli O1:K1 / APEC.